The following is a 149-amino-acid chain: 3-dehydroquinate dehydratase (149 aa).

The Proton acceptor role is filled by tyrosine 22. Asparagine 74, histidine 80, and aspartate 87 together coordinate substrate. Residue histidine 100 is the Proton donor of the active site. Substrate-binding positions include 101-102 and arginine 111; that span reads MS.

It belongs to the type-II 3-dehydroquinase family. Homododecamer.

It carries out the reaction 3-dehydroquinate = 3-dehydroshikimate + H2O. Its pathway is metabolic intermediate biosynthesis; chorismate biosynthesis; chorismate from D-erythrose 4-phosphate and phosphoenolpyruvate: step 3/7. In terms of biological role, catalyzes a trans-dehydration via an enolate intermediate. The protein is 3-dehydroquinate dehydratase of Leptothrix cholodnii (strain ATCC 51168 / LMG 8142 / SP-6) (Leptothrix discophora (strain SP-6)).